We begin with the raw amino-acid sequence, 284 residues long: Tropomyosin (284 aa).

A coiled-coil region spans residues 1–284 (MDGIKKKMIA…DQTFAELTGY (284 aa)). Basic and acidic residues-rich tracts occupy residues 29–42 (LKQK…KETE) and 111–136 (AKFD…RSIA). Disordered stretches follow at residues 29 to 49 (LKQK…LNNR) and 111 to 149 (AKFD…DQQK).

Belongs to the tropomyosin family.

Its function is as follows. Tropomyosin, in association with the troponin complex, plays a central role in the calcium dependent regulation of muscle contraction. The protein is Tropomyosin of Clonorchis sinensis (Chinese liver fluke).